Reading from the N-terminus, the 276-residue chain is HTH-type transcriptional activator RhaR (276 aa).

Residues 174–272 (ESLFSALNQS…SCTPTEYRSR (99 aa)) form the HTH araC/xylS-type domain. 2 consecutive DNA-binding regions (H-T-H motif) follow at residues 191-212 (ADFC…KQQT) and 239-262 (VANI…GKTF).

Binds DNA as a dimer.

It is found in the cytoplasm. In terms of biological role, activates expression of the rhaSR operon in response to L-rhamnose. The protein is HTH-type transcriptional activator RhaR of Mannheimia succiniciproducens (strain KCTC 0769BP / MBEL55E).